Reading from the N-terminus, the 243-residue chain is Ribosomal RNA small subunit methyltransferase E 2 (243 aa).

This sequence belongs to the RNA methyltransferase RsmE family.

The protein resides in the cytoplasm. It carries out the reaction uridine(1498) in 16S rRNA + S-adenosyl-L-methionine = N(3)-methyluridine(1498) in 16S rRNA + S-adenosyl-L-homocysteine + H(+). Its function is as follows. Specifically methylates the N3 position of the uracil ring of uridine 1498 (m3U1498) in 16S rRNA. Acts on the fully assembled 30S ribosomal subunit. This chain is Ribosomal RNA small subunit methyltransferase E 2 (rsmE2), found in Borreliella burgdorferi (strain ATCC 35210 / DSM 4680 / CIP 102532 / B31) (Borrelia burgdorferi).